The chain runs to 340 residues: CRISPR system Cmr subunit Cmr6 (340 aa).

This sequence belongs to the CRISPR system Cmr6 family. As to quaternary structure, part of the type III-B Cmr ribonucleoprotein (RNP) complex, an elongated RNP with Cmr2 and Cmr3 as the base, with Cmr4 and Cmr5 forming a helical core along the mature crRNA (39 or 45 nt in length), while the complex is capped by Cmr6 and Cmr1. The 5' end of the crRNA is bound to Cmr2 and Cmr3, while Cmr6 and a Cmr1 subunit (Cmr1-1 or Cmr1-2) cap the 3' end of the crRNA. The target RNA lies antiparallel to the crRNA, with its 5' end near Cmr1 and Cmr6 and its 3' end near Cmr2 and Cmr3; major target cleavage occurs nears the junction of Cmr1/Cmr6 and Cmr4/Cmr, with minor cleavage occurring at 6 nt intervals which coincide with the proposed spacing of Cmr4 subunits. Interacts with Cmr4 and Cmr5.

Its subcellular location is the cytoplasm. CRISPR (clustered regularly interspaced short palindromic repeat), is an adaptive immune system that provides protection against mobile genetic elements (viruses, transposable elements and conjugative plasmids). CRISPR clusters contain sequences complementary to antecedent mobile elements and target invading nucleic acids. CRISPR clusters are transcribed and processed into CRISPR RNA (crRNA), formerly called psiRNA (prokaryotic silencing) in this organism. Part of the Cmr ribonucleoprotein complex which has divalent cation-dependent endoribonuclease activity specific for ssRNA complementary to the crRNA (target RNA), generating 5' hydroxy- and 3' phosphate or 2'-3' cyclic phosphate termini. Cmr4 is probably the subunit that cleaves target RNA. Cmr complex does not cleave ssDNA complementary to the crRNA. Cleavage of invading RNA is guided by the crRNA; substrate cleavage occurs a fixed distance (14 nt) from the 3' end of the crRNA. In vitro reconstitution shows Cmr1-2 and Cmr5 are not absolutely necessary for target cleavage. The protein is CRISPR system Cmr subunit Cmr6 of Pyrococcus furiosus (strain ATCC 43587 / DSM 3638 / JCM 8422 / Vc1).